Here is a 359-residue protein sequence, read N- to C-terminus: Photosystem II protein D1 1 (359 aa).

The next 3 helical transmembrane spans lie at 29–46 (YVGW…AATI), 118–133 (HFLI…EWEL), and 142–156 (WICV…AASA). His-118 lines the chlorophyll a pocket. Tyr-126 contributes to the pheophytin a binding site. Asp-170 and Glu-189 together coordinate [CaMn4O5] cluster. The helical transmembrane segment at 197 to 218 (FHMLGVAGVFGGSLFSAMHGSL) threads the bilayer. Residue His-198 coordinates chlorophyll a. A quinone contacts are provided by residues His-215 and 264–265 (SF). His-215 contributes to the Fe cation binding site. His-272 contacts Fe cation. A helical membrane pass occupies residues 274–288 (FLAAWPVVGIWFTAL). [CaMn4O5] cluster is bound by residues His-332, Glu-333, Asp-342, and Ala-344. Positions 345–359 (AAESTPVALQAPAIG) are excised as a propeptide.

It belongs to the reaction center PufL/M/PsbA/D family. In terms of assembly, PSII is composed of 1 copy each of membrane proteins PsbA, PsbB, PsbC, PsbD, PsbE, PsbF, PsbH, PsbI, PsbJ, PsbK, PsbL, PsbM, PsbT, PsbX, PsbY, PsbZ, Psb30/Ycf12, peripheral proteins PsbO, CyanoQ (PsbQ), PsbU, PsbV and a large number of cofactors. It forms dimeric complexes. The D1/D2 heterodimer binds P680, chlorophylls that are the primary electron donor of PSII, and subsequent electron acceptors. It shares a non-heme iron and each subunit binds pheophytin, quinone, additional chlorophylls, carotenoids and lipids. D1 provides most of the ligands for the Mn4-Ca-O5 cluster of the oxygen-evolving complex (OEC). There is also a Cl(-1) ion associated with D1 and D2, which is required for oxygen evolution. The PSII complex binds additional chlorophylls, carotenoids and specific lipids. serves as cofactor. Tyr-161 forms a radical intermediate that is referred to as redox-active TyrZ, YZ or Y-Z. In terms of processing, C-terminally processed by CtpA; processing is essential to allow assembly of the oxygen-evolving complex and thus photosynthetic growth.

It is found in the cellular thylakoid membrane. It carries out the reaction 2 a plastoquinone + 4 hnu + 2 H2O = 2 a plastoquinol + O2. Functionally, photosystem II (PSII) is a light-driven water:plastoquinone oxidoreductase that uses light energy to abstract electrons from H(2)O, generating O(2) and a proton gradient subsequently used for ATP formation. It consists of a core antenna complex that captures photons, and an electron transfer chain that converts photonic excitation into a charge separation. The D1/D2 (PsbA/PsbD) reaction center heterodimer binds P680, the primary electron donor of PSII as well as several subsequent electron acceptors. This chain is Photosystem II protein D1 1, found in Synechococcus sp. (strain CC9605).